We begin with the raw amino-acid sequence, 152 residues long: Anaerobic nitrite reductase SYMA (152 aa).

Residues 2–151 (ALTERQEALL…LVATIKAEMK (150 aa)) enclose the Globin domain. Residues 35–39 (EAAPE) carry the Homodimerization motif. The heme b site is built by serine 45, lysine 59, histidine 63, arginine 93, and histidine 98. The short motif at 105–117 (DPHFEVMKGALLG) is the Homodimerization element.

It belongs to the plant globin family. In terms of assembly, homodimer. Requires heme b as cofactor. Root nodules.

It localises to the cytoplasm. It is found in the nucleus. It carries out the reaction Fe(III)-heme b-[protein] + nitric oxide + H2O = Fe(II)-heme b-[protein] + nitrite + 2 H(+). Its function is as follows. Phytoglobin that reduces nitrite to nitric oxide (NO) under anoxic conditions (e.g. during flooding or in waterlogged soil) and upon root nodulation. Required for general plant development and during nodulation, especially for the onset of symbiosis. Monitors nitric oxide (NO) levels during early phase of the nitrogen-fixing symbiosis and buffers oxygen in functioning nodules. May not function as an oxygen storage or transport protein. Has an unusually high affinity for O(2) through a hexacoordinate heme iron because of a very low dissociation constant. The polypeptide is Anaerobic nitrite reductase SYMA (Casuarina glauca (Swamp oak)).